The chain runs to 277 residues: NADPH-dependent 7-cyano-7-deazaguanine reductase (277 aa).

83-85 is a substrate binding site; it reads IES. Position 85 to 86 (85 to 86) interacts with NADPH; sequence SK. Cys184 acts as the Thioimide intermediate in catalysis. Asp191 (proton donor) is an active-site residue. A substrate-binding site is contributed by 223–224; sequence HE. Residue 252 to 253 participates in NADPH binding; that stretch reads RG.

This sequence belongs to the GTP cyclohydrolase I family. QueF type 2 subfamily. As to quaternary structure, homodimer.

The protein localises to the cytoplasm. It carries out the reaction 7-aminomethyl-7-carbaguanine + 2 NADP(+) = 7-cyano-7-deazaguanine + 2 NADPH + 3 H(+). The protein operates within tRNA modification; tRNA-queuosine biosynthesis. In terms of biological role, catalyzes the NADPH-dependent reduction of 7-cyano-7-deazaguanine (preQ0) to 7-aminomethyl-7-deazaguanine (preQ1). The polypeptide is NADPH-dependent 7-cyano-7-deazaguanine reductase (Cupriavidus pinatubonensis (strain JMP 134 / LMG 1197) (Cupriavidus necator (strain JMP 134))).